The following is a 59-amino-acid chain: Large ribosomal subunit protein uL30 (59 aa).

This sequence belongs to the universal ribosomal protein uL30 family. In terms of assembly, part of the 50S ribosomal subunit.

The chain is Large ribosomal subunit protein uL30 from Alteromonas mediterranea (strain DSM 17117 / CIP 110805 / LMG 28347 / Deep ecotype).